A 157-amino-acid chain; its full sequence is Ribosomal RNA large subunit methyltransferase H (157 aa).

S-adenosyl-L-methionine contacts are provided by residues leucine 73, glycine 105, and leucine 124 to phenylalanine 129.

Belongs to the RNA methyltransferase RlmH family. Homodimer.

Its subcellular location is the cytoplasm. The catalysed reaction is pseudouridine(1915) in 23S rRNA + S-adenosyl-L-methionine = N(3)-methylpseudouridine(1915) in 23S rRNA + S-adenosyl-L-homocysteine + H(+). In terms of biological role, specifically methylates the pseudouridine at position 1915 (m3Psi1915) in 23S rRNA. The chain is Ribosomal RNA large subunit methyltransferase H from Phocaeicola vulgatus (strain ATCC 8482 / DSM 1447 / JCM 5826 / CCUG 4940 / NBRC 14291 / NCTC 11154) (Bacteroides vulgatus).